An 88-amino-acid polypeptide reads, in one-letter code: MAHKKAGGSSRNGRDSAGRRLGVKKFGSEAVIPGNIIVRQRGTKWHPGTNVGMGKDHTLFALVPGKVQFETRRGRDFVTVVPLAQAAE.

The tract at residues 1-23 is disordered; sequence MAHKKAGGSSRNGRDSAGRRLGV.

The protein belongs to the bacterial ribosomal protein bL27 family.

In Methylorubrum extorquens (strain CM4 / NCIMB 13688) (Methylobacterium extorquens), this protein is Large ribosomal subunit protein bL27.